Reading from the N-terminus, the 332-residue chain is MLSSTTLLAILSALALTSVQAAPADKNSLDYLANKAGKRYLGTAVQSPQLVPGSQYVQILESQFDAITPENEMKWEVVEPTEGNFDFTGTDKIVAEAKKTGSLLRGHNICWDSQLRYAHEVAPKMKLCINDYNIETVNAKSQAMAKVAAGLLAKGAPLHCIGMFKNAKRRSSGLLIRTASSGLESHFIGGSTPKDIPAAMNLFSDQGLEVPMTELDVRIPVNGNDMPANATVAKEQVDDYYTSVSACLGNDLCPGVSIWQFADPTSWIPGVFKGKLIAVSCTFSGCLLQYCVGYGAALLYDAQYQPKSTYYVVQQALKDGKNSGSKFHGIKL.

An N-terminal signal peptide occupies residues 1 to 21; the sequence is MLSSTTLLAILSALALTSVQA. The region spanning 26 to 316 is the GH10 domain; the sequence is KNSLDYLANK…KSTYYVVQQA (291 aa). The active-site Proton donor is Glu-120. Cys-128 and Cys-160 are oxidised to a cystine. Catalysis depends on Glu-214, which acts as the Nucleophile. Cys-247 and Cys-253 are disulfide-bonded.

Belongs to the glycosyl hydrolase 10 (cellulase F) family.

The protein localises to the secreted. The enzyme catalyses Endohydrolysis of (1-&gt;4)-beta-D-xylosidic linkages in xylans.. Its function is as follows. Requires at least three xylose residues for catalytic activity. Does not have activity against xylobiose. The polypeptide is Endo-1,4-beta-xylanase (Naganishia albida (Cryptococcus albidus)).